The chain runs to 303 residues: RELT-like protein 2 (303 aa).

The chain crosses the membrane as a helical span at residues 15–35 (LYMLFLLVLVFFLMGLVGFMI). Disordered stretches follow at residues 46–67 (CRTS…DDDM) and 111–303 (SSLQ…AGGV). Serine 52 bears the Phosphoserine mark. 2 stretches are compositionally biased toward basic and acidic residues: residues 148 to 158 (RSKEGKSRPRP) and 172 to 188 (THIE…DGSP). Residues 194 to 212 (GSGGGQDPGGGQGPGGGQP) show a composition bias toward gly residues.

It belongs to the RELT family. As to quaternary structure, interacts with RELT, RELL1, OXSR1, PLSCR1 and TRAF2.

It localises to the cell membrane. Induces activation of MAPK14/p38 cascade, when overexpressed. Induces apoptosis, when overexpressed. The protein is RELT-like protein 2 (RELL2) of Bos taurus (Bovine).